A 467-amino-acid polypeptide reads, in one-letter code: Transcription factor bHLH3 (467 aa).

Residues 316 to 365 (EEALNHVEAERQRREKLNQRFYALRAVVPNISKMDKASLLADAITYITDM) enclose the bHLH domain.

As to quaternary structure, homodimer.

Its subcellular location is the nucleus. This chain is Transcription factor bHLH3 (BHLH3), found in Arabidopsis thaliana (Mouse-ear cress).